Consider the following 104-residue polypeptide: Flagellar hook-basal body complex protein FliE (104 aa).

This sequence belongs to the FliE family.

It localises to the bacterial flagellum basal body. This chain is Flagellar hook-basal body complex protein FliE, found in Serratia proteamaculans (strain 568).